Consider the following 96-residue polypeptide: Putative pterin-4-alpha-carbinolamine dehydratase (96 aa).

Belongs to the pterin-4-alpha-carbinolamine dehydratase family.

The catalysed reaction is (4aS,6R)-4a-hydroxy-L-erythro-5,6,7,8-tetrahydrobiopterin = (6R)-L-erythro-6,7-dihydrobiopterin + H2O. This is Putative pterin-4-alpha-carbinolamine dehydratase from Caulobacter sp. (strain K31).